The sequence spans 311 residues: Homoserine kinase (311 aa).

ATP is bound at residue 88–98; that stretch reads PEGLGLGSSGA.

This sequence belongs to the GHMP kinase family. Homoserine kinase subfamily.

The protein resides in the cytoplasm. It catalyses the reaction L-homoserine + ATP = O-phospho-L-homoserine + ADP + H(+). It participates in amino-acid biosynthesis; L-threonine biosynthesis; L-threonine from L-aspartate: step 4/5. Its function is as follows. Catalyzes the ATP-dependent phosphorylation of L-homoserine to L-homoserine phosphate. In Saccharolobus solfataricus (strain ATCC 35092 / DSM 1617 / JCM 11322 / P2) (Sulfolobus solfataricus), this protein is Homoserine kinase.